The following is an 82-amino-acid chain: Small ribosomal subunit protein bS16 (82 aa).

This sequence belongs to the bacterial ribosomal protein bS16 family.

The protein is Small ribosomal subunit protein bS16 of Actinobacillus succinogenes (strain ATCC 55618 / DSM 22257 / CCUG 43843 / 130Z).